A 148-amino-acid chain; its full sequence is Ubiquitin-conjugating enzyme E2 29 (148 aa).

The region spanning Met1 to Leu147 is the UBC core domain. The active-site Glycyl thioester intermediate is the Cys85.

The protein belongs to the ubiquitin-conjugating enzyme family.

It carries out the reaction S-ubiquitinyl-[E1 ubiquitin-activating enzyme]-L-cysteine + [E2 ubiquitin-conjugating enzyme]-L-cysteine = [E1 ubiquitin-activating enzyme]-L-cysteine + S-ubiquitinyl-[E2 ubiquitin-conjugating enzyme]-L-cysteine.. Its pathway is protein modification; protein ubiquitination. Functionally, accepts the ubiquitin from the E1 complex and catalyzes its covalent attachment to other proteins. The sequence is that of Ubiquitin-conjugating enzyme E2 29 (UBC29) from Arabidopsis thaliana (Mouse-ear cress).